Here is a 159-residue protein sequence, read N- to C-terminus: 6,7-dimethyl-8-ribityllumazine synthase (159 aa).

5-amino-6-(D-ribitylamino)uracil is bound by residues Trp26, 58-60 (AIE), and 80-82 (VVI). 85–86 (ET) provides a ligand contact to (2S)-2-hydroxy-3-oxobutyl phosphate. The active-site Proton donor is the His88. Asn113 is a 5-amino-6-(D-ribitylamino)uracil binding site. Arg127 lines the (2S)-2-hydroxy-3-oxobutyl phosphate pocket.

This sequence belongs to the DMRL synthase family. As to quaternary structure, homopentamer.

The catalysed reaction is (2S)-2-hydroxy-3-oxobutyl phosphate + 5-amino-6-(D-ribitylamino)uracil = 6,7-dimethyl-8-(1-D-ribityl)lumazine + phosphate + 2 H2O + H(+). It participates in cofactor biosynthesis; riboflavin biosynthesis; riboflavin from 2-hydroxy-3-oxobutyl phosphate and 5-amino-6-(D-ribitylamino)uracil: step 1/2. In terms of biological role, catalyzes the formation of 6,7-dimethyl-8-ribityllumazine by condensation of 5-amino-6-(D-ribitylamino)uracil with 3,4-dihydroxy-2-butanone 4-phosphate. This is the penultimate step in the biosynthesis of riboflavin. The protein is 6,7-dimethyl-8-ribityllumazine synthase of Mycolicibacterium gilvum (strain PYR-GCK) (Mycobacterium gilvum (strain PYR-GCK)).